A 595-amino-acid polypeptide reads, in one-letter code: MHRYRSHTCAALRKSDVGSTVRLSGWVHRVRDHGGVLFIDLRDHYGMTQVVADPDSPAFKMAETVRGEWVIRIDGTVKARTDDTVNKNMPTGEIELYAREIEVLSAAKELPLPVFGEPDYPEDVRLKYRFLDLRRETLHRNIVKRTEVISAMRRGMSDIGFTEYTTPILTASSPEGARDFLVPSRIHPGTFYALPQAPQQYKQLLMVAGFDRYFQIAPCFRDEDPRADRLPGEFYQLDLEMSFVEQEDVWDTMEPMIRAIFADFADGKPVTDKFPRIPYDTAIRKYGSDKPDLRNPIEMQEVTQHFAGSGFKVFANMIATNPKVEIWAIPAKTGGSRAFCDRMNAWAQSQGQPGLGYIFWRKEGEKLEGAGPLAKNIGEERTDAIRTQLGLEDGDACFFVAGEPAKFYKFAGEARTRAGEELNLVDRDRFELCWIVDFPFYEWNEDEKRVDFAHNPFSMPQGGLKALSGDDLLSIKAFQYDMVCNGFEIASGSIRNQSPELMVKAFENVGLSQADVEEQFGGLYRAFQYGAPPHGGMAFGIDRIVMLIVGAKNLREISLFPMNQQAVDLLMGAPSPATPAQLRELAIRPIPQKKD.

Residue Glu-175 coordinates L-aspartate. The interval 199-202 (QQYK) is aspartate. Positions 221 and 454 each coordinate L-aspartate. Residue 221-223 (RDE) coordinates ATP. Glu-488 contacts ATP. L-aspartate is bound at residue Arg-495. 540–543 (GIDR) serves as a coordination point for ATP.

The protein belongs to the class-II aminoacyl-tRNA synthetase family. Type 1 subfamily. Homodimer.

The protein localises to the cytoplasm. It catalyses the reaction tRNA(Asx) + L-aspartate + ATP = L-aspartyl-tRNA(Asx) + AMP + diphosphate. Its function is as follows. Aspartyl-tRNA synthetase with relaxed tRNA specificity since it is able to aspartylate not only its cognate tRNA(Asp) but also tRNA(Asn). Reaction proceeds in two steps: L-aspartate is first activated by ATP to form Asp-AMP and then transferred to the acceptor end of tRNA(Asp/Asn). The chain is Aspartate--tRNA(Asp/Asn) ligase from Sinorhizobium fredii (strain NBRC 101917 / NGR234).